We begin with the raw amino-acid sequence, 634 residues long: Extracellular metalloproteinase mep (634 aa).

The N-terminal stretch at 1-18 (MRGLLLAGALALPASVFA) is a signal peptide. Positions 19–245 (HPAHQSYGLN…IHGVVDYVAE (227 aa)) are excised as a propeptide. A glycan (N-linked (GlcNAc...) asparagine) is linked at N286. Position 429 (H429) interacts with Zn(2+). E430 is a catalytic residue. H433 serves as a coordination point for Zn(2+).

Belongs to the peptidase M36 family. Zn(2+) serves as cofactor.

It localises to the secreted. Functionally, secreted metalloproteinase that allows assimilation of proteinaceous substrates and probably acts as a virulence factor. In Aspergillus fumigatus (strain CBS 144.89 / FGSC A1163 / CEA10) (Neosartorya fumigata), this protein is Extracellular metalloproteinase mep (mep).